Consider the following 258-residue polypeptide: MLAKRIIPCLDVRDGQVVKGIQFRHHEIIGDIVPLAQRYATEGADELVFYDITASSDGRVVDKSWITKVAEVIDIPFCVAGGIKTVEDAGQILSFGADKISINSPALTDPTLITRLADRYGVQCIVVGIDTWFDESTGRYQVYQFTGDEKRTKATQWQTLNWVKEAQHRGAGEIVLNMMNQDGVRNGYDLTQLKQVRDVCHVPLIASGGAGAPEHFLDAFKQANVDGALAASVFHKHIINICELKQYLSQQGVEIRTC.

Active-site residues include Asp-11 and Asp-130.

Belongs to the HisA/HisF family. Heterodimer of HisH and HisF.

It localises to the cytoplasm. It carries out the reaction 5-[(5-phospho-1-deoxy-D-ribulos-1-ylimino)methylamino]-1-(5-phospho-beta-D-ribosyl)imidazole-4-carboxamide + L-glutamine = D-erythro-1-(imidazol-4-yl)glycerol 3-phosphate + 5-amino-1-(5-phospho-beta-D-ribosyl)imidazole-4-carboxamide + L-glutamate + H(+). It functions in the pathway amino-acid biosynthesis; L-histidine biosynthesis; L-histidine from 5-phospho-alpha-D-ribose 1-diphosphate: step 5/9. Functionally, IGPS catalyzes the conversion of PRFAR and glutamine to IGP, AICAR and glutamate. The HisF subunit catalyzes the cyclization activity that produces IGP and AICAR from PRFAR using the ammonia provided by the HisH subunit. The sequence is that of Imidazole glycerol phosphate synthase subunit HisF from Photorhabdus laumondii subsp. laumondii (strain DSM 15139 / CIP 105565 / TT01) (Photorhabdus luminescens subsp. laumondii).